A 336-amino-acid chain; its full sequence is ATP-dependent 6-phosphofructokinase (336 aa).

Gly-11 contacts ATP. 21–25 (RAVVR) is a binding site for ADP. ATP contacts are provided by residues 72-73 (RY) and 102-105 (GDGS). Asp-103 contributes to the Mg(2+) binding site. A substrate-binding site is contributed by 125-127 (TID). Asp-127 serves as the catalytic Proton acceptor. Arg-154 is a binding site for ADP. Substrate is bound by residues Arg-162 and 169-171 (MGR). ADP contacts are provided by residues 185 to 187 (GAD), Lys-211, and 213 to 215 (KKH). Substrate contacts are provided by residues Glu-222, Arg-244, and 250–253 (HIQR).

Belongs to the phosphofructokinase type A (PFKA) family. ATP-dependent PFK group I subfamily. Prokaryotic clade 'B1' sub-subfamily. As to quaternary structure, homotetramer. Requires Mg(2+) as cofactor.

It localises to the cytoplasm. It carries out the reaction beta-D-fructose 6-phosphate + ATP = beta-D-fructose 1,6-bisphosphate + ADP + H(+). The protein operates within carbohydrate degradation; glycolysis; D-glyceraldehyde 3-phosphate and glycerone phosphate from D-glucose: step 3/4. Its activity is regulated as follows. Allosterically activated by ADP and other diphosphonucleosides, and allosterically inhibited by phosphoenolpyruvate. Functionally, catalyzes the phosphorylation of D-fructose 6-phosphate to fructose 1,6-bisphosphate by ATP, the first committing step of glycolysis. The sequence is that of ATP-dependent 6-phosphofructokinase from Streptococcus suis (strain 05ZYH33).